The following is a 232-amino-acid chain: Orotidine 5'-phosphate decarboxylase (232 aa).

Residues Asp-11, Lys-32, 59 to 68 (DLKLHDIPHT), Thr-116, Arg-178, Gln-188, Gly-208, and Arg-209 contribute to the substrate site. Lys-61 serves as the catalytic Proton donor.

It belongs to the OMP decarboxylase family. Type 1 subfamily. Homodimer.

It catalyses the reaction orotidine 5'-phosphate + H(+) = UMP + CO2. The protein operates within pyrimidine metabolism; UMP biosynthesis via de novo pathway; UMP from orotate: step 2/2. In terms of biological role, catalyzes the decarboxylation of orotidine 5'-monophosphate (OMP) to uridine 5'-monophosphate (UMP). This is Orotidine 5'-phosphate decarboxylase from Synechococcus sp. (strain JA-3-3Ab) (Cyanobacteria bacterium Yellowstone A-Prime).